The following is a 127-amino-acid chain: Large ribosomal subunit protein eL8 (127 aa).

It belongs to the eukaryotic ribosomal protein eL8 family. In terms of assembly, part of the 50S ribosomal subunit. Component of box C/D small ribonucleoprotein (sRNP) particles that contain rpl7ae, FlpA and nop5, plus a guide RNA. These sRNP particles form homodimers, giving rise to an asymmetric holoenzyme. Probably part of the RNase P complex.

Its subcellular location is the cytoplasm. Its function is as follows. Multifunctional RNA-binding protein that recognizes the K-turn motif in ribosomal RNA, the RNA component of RNase P, box H/ACA, box C/D and box C'/D' sRNAs. The protein is Large ribosomal subunit protein eL8 of Saccharolobus solfataricus (strain ATCC 35092 / DSM 1617 / JCM 11322 / P2) (Sulfolobus solfataricus).